The primary structure comprises 530 residues: Hyccin 2 (530 aa).

2 positions are modified to phosphothreonine: T30 and T306. Residues S321 and S341 each carry the phosphoserine modification. A disordered region spans residues 328 to 404 (RREGAEGLNG…SNESPRDSVV (77 aa)). Residues 353–373 (SGASLSSQPHGTKPPSSSQRG) are compositionally biased toward polar residues. S430, S442, S444, and S491 each carry phosphoserine. Positions 502 to 530 (EGKELLSPGAPLTKQSRSPSFNMQLISQV) are disordered. Residues 514–530 (TKQSRSPSFNMQLISQV) show a composition bias toward polar residues.

Belongs to the Hyccin family. In terms of assembly, component of a phosphatidylinositol 4-kinase (PI4K) complex, composed of PI4KA, EFR3 (EFR3A or EFR3B), TTC7 (TTC7A or TTC7B) and HYCC (HYCC1 or HYCC2). In terms of tissue distribution, expressed in the central nervous system. Expressed at much lower level in oligodendrocytes than in neurons.

Its subcellular location is the cytoplasm. The protein resides in the cytosol. It localises to the cell membrane. In terms of biological role, component of a complex required to localize phosphatidylinositol 4-kinase (PI4K) to the plasma membrane. The sequence is that of Hyccin 2 (Hycc2) from Mus musculus (Mouse).